The chain runs to 301 residues: Acetylglutamate kinase (301 aa).

Substrate-binding positions include 72-73 (GG), arginine 94, and asparagine 199.

It belongs to the acetylglutamate kinase family. ArgB subfamily.

Its subcellular location is the cytoplasm. It carries out the reaction N-acetyl-L-glutamate + ATP = N-acetyl-L-glutamyl 5-phosphate + ADP. The protein operates within amino-acid biosynthesis; L-arginine biosynthesis; N(2)-acetyl-L-ornithine from L-glutamate: step 2/4. Catalyzes the ATP-dependent phosphorylation of N-acetyl-L-glutamate. The protein is Acetylglutamate kinase of Bartonella tribocorum (strain CIP 105476 / IBS 506).